Reading from the N-terminus, the 1294-residue chain is MARCGRLRAGTAAKLRRWRKGHSSDCNPETRRHRLAARSRFYSRPTEKSNLTVDAVKLHNELQSGSLRVERPSGSSQLPMEEGDAGEAATERSSGTFLSGLSDCTNVTFSRVQRFWESNSAAHKEICAVLAAVTDVIRSQGGKETETEYFAALMTTLEAVDSPESVAAVAYLLNLVLKRVPSPVLIKKFSDASKAFMNIISSQACSGSTSALRWVLSCLATLLRKQDLAAWSYPVTLQVYHGLLSFCVHTKPKVRKAAQHGVCSVLRGSEFMFGDEAPEHHPAAPSSAKFCVQEIEKAGGTKEATTTLHVLALLRDLLPCFPAAVLKTCCETLLRVMTLSHVLVTACAMQAFHSLFSAQPRTSCLPAELNAQIITALYDYVPSANDLQPLLTWLTTMERAHVNLGRLQKDLCWAHLPRLFSATMNCFLSPHLQVVAAAAQTLETLLNECIAPHMDELGNVSASTPAPGSYLCKMFRSVEEGLTYRFHAAWDGVLQVLEVFFEVCGKQCHPIMRKCLQSLCDLRLSPHFPYTTEVDQAVGAAVGAMGPEVLLEAVPLQIDGKEETLDFPRSWLLPVLRDYVQGARLGFFTSYFLPLAATLKSRALEFAQAGKSLESKIYDTLQWQVWTLLPGFCTRPTDVVEAFKGLARTLGMAISERPDLRPTVCQALRTLIHHGCGTDAERAEVGRFAKNFLPILFNVYSQPEEDGGSSSQRRSVLDTVRAYLTITDPQLGCGFLQKASEKLTSPESSEFARLSILDLVVAMSPYANEQALGSLYRTIQPSLQSKDHSMQKKAYRVLEEVCAAPHAPCQAFVHSHLEELQAVLLDSLKSAASPAKRPRLKCLFHIMKQLSAEHEPFVTALVPEVILCTKEVSVGARKNAFMLLVEMGHAFIRFGPTPQEAMERFLLLVYAGLTGSVTMISCTVLALTRLFFEFRDHMELNVVEQLLQNICLLLGSRTRDVVKAALGFIKVVLLLVDTTLLAKHVQTMLEAVGSLSDDMRRHFRMKLRNLFTKFIRKFGFELVQGLLPAEFHKVLVNIRKAEARSRKQRALRQAAAEAEEEEAPAQPKGDSMEEILADSEEEEEEEEERRRGKVRKKQARQKGQAWLKEGEEDEPLNFLDPNVSQRVLATEPSLKKSRGVKHDFQVSEDGRLIIHDEEEEVDNDEAKGVEEEVADVLQEVGLRSKKSQKRRFREEPDDDEPETGTYSQYRAGGSGIHRPLDKKPAFGAEYRSKKGKGDVKKKGQLDPYAYIPLNRAKLNKRKQAKMQGQFKGLMKGAQRGAKAGRKNRLKDRRP.

The interval 66–92 is disordered; the sequence is SLRVERPSGSSQLPMEEGDAGEAATER. A helical membrane pass occupies residues 905–925; that stretch reads FLLLVYAGLTGSVTMISCTVL. Disordered stretches follow at residues 1049 to 1144, 1178 to 1225, and 1255 to 1294; these read RALR…KHDF, QEVG…KKPA, and RAKL…DRRP. A compositionally biased stretch (acidic residues) spans 1072–1087; it reads MEEILADSEEEEEEEE. Residues 1091–1100 show a composition bias toward basic residues; sequence RGKVRKKQAR. The segment covering 1282 to 1294 has biased composition (basic residues); the sequence is KAGRKNRLKDRRP.

It belongs to the RRP12 family.

It localises to the nucleus. The protein resides in the nucleolus. It is found in the nucleus membrane. This chain is RRP12-like protein (RRP12), found in Gallus gallus (Chicken).